The sequence spans 1215 residues: Pesticidal crystal protein Cry1Ka (1215 aa).

It belongs to the delta endotoxin family.

Functionally, promotes colloidosmotic lysis by binding to the midgut epithelial cells of insects. Selectively toxic to Artogeia rapae but not active on Plutella xylostella. The polypeptide is Pesticidal crystal protein Cry1Ka (cry1Ka) (Bacillus thuringiensis subsp. morrisoni).